Reading from the N-terminus, the 371-residue chain is Peptide chain release factor 2 (371 aa).

Q247 bears the N5-methylglutamine mark.

The protein belongs to the prokaryotic/mitochondrial release factor family. In terms of processing, methylated by PrmC. Methylation increases the termination efficiency of RF2.

It is found in the cytoplasm. Functionally, peptide chain release factor 2 directs the termination of translation in response to the peptide chain termination codons UGA and UAA. The sequence is that of Peptide chain release factor 2 from Caulobacter vibrioides (strain ATCC 19089 / CIP 103742 / CB 15) (Caulobacter crescentus).